Here is a 138-residue protein sequence, read N- to C-terminus: Phosphoribosyl-AMP cyclohydrolase (138 aa).

Asp-84 provides a ligand contact to Mg(2+). Cys-85 is a Zn(2+) binding site. Asp-86 and Asp-88 together coordinate Mg(2+). Zn(2+) contacts are provided by Cys-102 and Cys-109.

It belongs to the PRA-CH family. Homodimer. It depends on Mg(2+) as a cofactor. Zn(2+) serves as cofactor.

The protein resides in the cytoplasm. It catalyses the reaction 1-(5-phospho-beta-D-ribosyl)-5'-AMP + H2O = 1-(5-phospho-beta-D-ribosyl)-5-[(5-phospho-beta-D-ribosylamino)methylideneamino]imidazole-4-carboxamide. The protein operates within amino-acid biosynthesis; L-histidine biosynthesis; L-histidine from 5-phospho-alpha-D-ribose 1-diphosphate: step 3/9. Its function is as follows. Catalyzes the hydrolysis of the adenine ring of phosphoribosyl-AMP. The protein is Phosphoribosyl-AMP cyclohydrolase of Burkholderia orbicola (strain MC0-3).